The following is an 83-amino-acid chain: U25-theraphotoxin-Cg1a (83 aa).

Residues 1 to 23 form the signal peptide; that stretch reads MRFHTLLFLSFLLLVSCALICTA. The propeptide occupies 24–48; it reads QHPGLEKSGMFHENVGKGQHIEEKR. Disulfide bonds link Cys50/Cys66, Cys57/Cys71, and Cys65/Cys81.

This sequence belongs to the neurotoxin 07 (Beta/delta-agtx) family. 03 (aga-4) subfamily. JZTX sub-subfamily. Expressed by the venom gland.

The protein localises to the secreted. Inhibits TTX-sensitive sodium currents in rat dorsal root ganglion (DRG) neurons. In Chilobrachys guangxiensis (Chinese earth tiger tarantula), this protein is U25-theraphotoxin-Cg1a.